Reading from the N-terminus, the 178-residue chain is PRA1 family protein 2 (178 aa).

Residues 1 to 41 (MSEVRLPPLRALDDFVLGSARLAAPDPCDPQRWCHRVINNL) are Cytoplasmic-facing. Residues 42–62 (LYYQTNYLLCFGIGLALAGYV) form a helical membrane-spanning segment. Topologically, residues 63–64 (RP) are extracellular. The helical transmembrane segment at 65 to 85 (LHTLLSALVVAVALGVLVWAA) threads the bilayer. At 86–96 (ETRAAVRRCRR) the chain is on the cytoplasmic side. The chain crosses the membrane as a helical span at residues 97-119 (SHPAACLAAVLAVGLLVLWVAGG). At 120–122 (ACT) the chain is on the extracellular side. The chain crosses the membrane as a helical span at residues 123–140 (FLFSIAGPVLLILVHASL). The Cytoplasmic segment spans residues 141–178 (RLRNLKNKIENKIESIGLKRTPMGLLLEALGQEQEAGS).

The protein belongs to the PRA1 family. Interacts with CCR5 and GDE1. As to expression, strong expression in the brain, small intestine, lung, spleen, and pancreas as well as in tumor tissues of the breast, colon, lung and ovary, with a weaker expression in normal tissues of the same patient. High expression in neuroblastic tumors. Strongly expressed in Purkinje cells and more moderately in cells of the molecular and the granular layers in the cerebellum. Detected in neuronal cells, but not in non-neuronal cells in the cerebral cortex, hippocampus, and lateral ventricles.

It localises to the endosome membrane. Its function is as follows. May be involved in ER/Golgi transport and vesicular traffic. Plays a proapoptotic role in cerulenin-induced neuroblastoma apoptosis. This Homo sapiens (Human) protein is PRA1 family protein 2 (PRAF2).